The chain runs to 215 residues: uncharacterized protein (215 aa).

A signal peptide spans 1 to 17 (MKKVLASATILSLMLVG). Residues 17–110 (GCSNGGNDES…NKQQQSVQDN (94 aa)) are disordered. Cysteine 18 carries N-palmitoyl cysteine lipidation. Cysteine 18 carries S-diacylglycerol cysteine lipidation. A compositionally biased stretch (basic and acidic residues) spans 25–69 (ESSHKDDSSKTEQKDKSSSQHDSKKDSKRNDTNNKQDNQENKSNK). The segment covering 70–95 (EQTSNQNSNAGEQRTSERPTTNSNGI) has biased composition (polar residues). Positions 96–110 (SSDNQNKQQQSVQDN) are enriched in low complexity.

The protein resides in the cell membrane. This is an uncharacterized protein from Staphylococcus epidermidis (strain ATCC 12228 / FDA PCI 1200).